The primary structure comprises 216 residues: Redox-sensing transcriptional repressor Rex 1 (216 aa).

Residues 16–55 (LYYRYLRMLHDTGKNKVSSTELSEAVQVDSATIRRDFSYF) constitute a DNA-binding region (H-T-H motif). 90–95 (GVGNLG) contributes to the NAD(+) binding site.

Belongs to the transcriptional regulatory Rex family. As to quaternary structure, homodimer.

Its subcellular location is the cytoplasm. Its function is as follows. Modulates transcription in response to changes in cellular NADH/NAD(+) redox state. The polypeptide is Redox-sensing transcriptional repressor Rex 1 (Enterococcus faecalis (strain ATCC 700802 / V583)).